Here is a 1172-residue protein sequence, read N- to C-terminus: WD repeat-containing protein 48 homolog (1172 aa).

Positions 1–115 are disordered; the sequence is MYEYYSTGKI…HSYGGGGGGT (115 aa). The segment covering 13 to 36 has biased composition (polar residues); it reads LPQQVDSNGINSKPMNSSPSTPIP. A compositionally biased stretch (low complexity) spans 37 to 63; it reads NNNNNNNNNNNNNNNNNNNNNNNNNNN. Residues 64-89 show a composition bias toward polar residues; that stretch reads RNKSQQSFYLNNNNRNCGFSSPTKPQ. Low complexity predominate over residues 90 to 107; the sequence is YNNNNNNNNNNNSNYNHS. 7 WD repeats span residues 152-202, 208-246, 249-548, 560-599, 602-641, 645-683, and 686-727; these read RHCF…GFKF, DHTD…CVNS, FHDD…SPMF, GEGI…KIFK, GHTD…CIQV, LHTD…QSRL, and RENE…NQSI. The span at 341–365 shows a compositional bias: low complexity; the sequence is ISTNNNNNNSSSSNNNNNNNNNNNN. Residues 341–544 are disordered; the sequence is ISTNNNNNNS…NDNNNLNKKF (204 aa). 3 stretches are compositionally biased toward polar residues: residues 366-377, 388-408, and 417-434; these read GQTNTHENTAET, QLSS…NFRN, and PPSS…SNGR. Over residues 435–485 the composition is skewed to low complexity; that stretch reads NVNNRENNNNNNNNNNNNNNNNNNNNNNNNNNNNNNNNNINNNNHENNGNV. Positions 486–503 are enriched in acidic residues; the sequence is DVDDEDDDDDDDDDDDDD. Over residues 504-513 the composition is skewed to basic and acidic residues; that stretch reads CNKNKKKYDD. Over residues 514-543 the composition is skewed to low complexity; sequence NNNNNNYNNNNNKKNNSNDNNNDNNNLNKK. Low complexity predominate over residues 745-769; it reads NNNNNNNNNNNNNNNNNNNNNNNNN. The disordered stretch occupies residues 745-775; the sequence is NNNNNNNNNNNNNNNNNNNNNNNNNNREKLS. One copy of the WD 8 repeat lies at 794–833; that stretch reads QGRAGIIKNQVLNNRRQVLTKDNDNNVQLWDITKGKEIES. Residues 926–986 are disordered; it reads ELNHSNDSVN…TNSTTPNSGR (61 aa). The segment covering 930–984 has biased composition (low complexity); sequence SNDSVNSSLSSNTSGDNNNNNYNNYNNYNNNNNNGLQKSSSSSSIVSTNSTTPNS.

This sequence belongs to the WD repeat WDR48 family.

This is WD repeat-containing protein 48 homolog from Dictyostelium discoideum (Social amoeba).